A 126-amino-acid polypeptide reads, in one-letter code: Glycine cleavage system H protein (126 aa).

Residues 19–100 enclose the Lipoyl-binding domain; sequence DGKIGITDHA…AHAAWMVKVE (82 aa). At Lys60 the chain carries N6-lipoyllysine.

It belongs to the GcvH family. In terms of assembly, the glycine cleavage system is composed of four proteins: P, T, L and H. It depends on (R)-lipoate as a cofactor.

The glycine cleavage system catalyzes the degradation of glycine. The H protein shuttles the methylamine group of glycine from the P protein to the T protein. The polypeptide is Glycine cleavage system H protein (Koribacter versatilis (strain Ellin345)).